A 67-amino-acid chain; its full sequence is Large ribosomal subunit protein bL35 (67 aa).

The protein belongs to the bacterial ribosomal protein bL35 family.

This Dehalococcoides mccartyi (strain ATCC BAA-2100 / JCM 16839 / KCTC 5957 / BAV1) protein is Large ribosomal subunit protein bL35.